Consider the following 967-residue polypeptide: Importin-alpha re-exporter (967 aa).

The Importin N-terminal domain occupies 20-95; that stretch reads AEEALKVWEL…KREIINLMLK (76 aa).

This sequence belongs to the XPO2/CSE1 family. In terms of assembly, binds with high affinity to importin-alpha only in the presence of RanGTP.

The protein resides in the cytoplasm. It is found in the nucleus envelope. Functionally, export receptor for importin alpha. Mediates importin-alpha re-export from the nucleus to the cytoplasm after import substrates have been released into the nucleoplasm. This Schizosaccharomyces pombe (strain 972 / ATCC 24843) (Fission yeast) protein is Importin-alpha re-exporter (kap109).